The chain runs to 1407 residues: DNA-directed RNA polymerase subunit beta' (1407 aa).

Zn(2+) is bound by residues C70, C72, C85, and C88. Residues D460, D462, and D464 each coordinate Mg(2+). Zn(2+) contacts are provided by C814, C888, C895, and C898.

It belongs to the RNA polymerase beta' chain family. In terms of assembly, the RNAP catalytic core consists of 2 alpha, 1 beta, 1 beta' and 1 omega subunit. When a sigma factor is associated with the core the holoenzyme is formed, which can initiate transcription. The cofactor is Mg(2+). Zn(2+) is required as a cofactor.

The enzyme catalyses RNA(n) + a ribonucleoside 5'-triphosphate = RNA(n+1) + diphosphate. DNA-dependent RNA polymerase catalyzes the transcription of DNA into RNA using the four ribonucleoside triphosphates as substrates. The polypeptide is DNA-directed RNA polymerase subunit beta' (Salmonella paratyphi A (strain ATCC 9150 / SARB42)).